Reading from the N-terminus, the 370-residue chain is Early nodulin-like protein 1 (370 aa).

The signal sequence occupies residues 1–27 (MSAIMKSLCFSFLILASFATFFSVADA). In terms of domain architecture, Phytocyanin spans 28-129 (WRFNVGGNGA…GQKLIVVVLA (102 aa)). An N-linked (GlcNAc...) asparagine glycan is attached at N58. A disulfide bridge links C83 with C117. Low complexity predominate over residues 135-175 (SAPAHSPVPSVSPTQPPKSHSPVSPVAPASAPSKSQPPRSS). The disordered stretch occupies residues 135–347 (SAPAHSPVPS…PAPSPRTNSA (213 aa)). Residues 176 to 194 (VSPAQPPKSSSPISHTPAL) are compositionally biased toward polar residues. Low complexity-rich tracts occupy residues 195 to 205 (SPSHATSHSPA) and 215 to 290 (SPVS…QSPA). Over residues 291-305 (TPSPMTPQSPSPVSS) the composition is skewed to pro residues. Low complexity predominate over residues 306–318 (PSPDQSAAPSDQS). Over residues 319–334 (TPLAPSPSETTPTADN) the composition is skewed to polar residues. Residue N334 is glycosylated (N-linked (GlcNAc...) asparagine). Residue N345 is the site of GPI-anchor amidated asparagine attachment. Positions 346–370 (SASGLAVTSVMSTLFSATFTFLMFA) are cleaved as a propeptide — removed in mature form.

This sequence belongs to the early nodulin-like (ENODL) family. As to expression, mostly expressed in stems, leaves and flowers, and, to a lower extent, in seedlings, roots and seeds.

The protein resides in the cell membrane. May act as a carbohydrate transporter. The sequence is that of Early nodulin-like protein 1 from Arabidopsis thaliana (Mouse-ear cress).